Here is a 479-residue protein sequence, read N- to C-terminus: Adenosylhomocysteinase (479 aa).

The substrate site is built by Thr56, Asp134, and Glu200. Thr201 to Thr203 serves as a coordination point for NAD(+). Substrate is bound by residues Lys230 and Asp234. NAD(+) contacts are provided by residues Asn235, Gly264–Gly269, Glu287, Asn322, Ile343–His345, and Asn391.

The protein belongs to the adenosylhomocysteinase family. As to quaternary structure, homotetramer. It depends on NAD(+) as a cofactor.

It carries out the reaction S-adenosyl-L-homocysteine + H2O = L-homocysteine + adenosine. It participates in amino-acid biosynthesis; L-homocysteine biosynthesis; L-homocysteine from S-adenosyl-L-homocysteine: step 1/1. Its function is as follows. Adenosylhomocysteine is a competitive inhibitor of S-adenosyl-L-methionine-dependent methyl transferase reactions; therefore adenosylhomocysteinase may play a key role in the control of methylations via regulation of the intracellular concentration of adenosylhomocysteine. In Plasmodium falciparum (isolate 3D7), this protein is Adenosylhomocysteinase.